We begin with the raw amino-acid sequence, 529 residues long: 3-ketoacyl-CoA synthase 20 (529 aa).

The tract at residues 1–22 (MSHNQNQPHRPVPVHVTNAEPN) is disordered. The next 2 membrane-spanning stretches (helical) occupy residues 52-72 (LYIL…SFTI) and 84-104 (FHFL…TAYF). An FAE domain is found at 103–396 (YFTTRPRRVF…FFATLVARKV (294 aa)). Residues cysteine 247, histidine 326, histidine 415, histidine 419, and asparagine 452 contribute to the active site.

The protein belongs to the thiolase-like superfamily. Chalcone/stilbene synthases family. As to expression, expressed in aerial organs. Expressed in leaves, flowers, siliques and stems. Expressed in roots, young seedlings, leaves, flowers and siliques.

Its subcellular location is the membrane. It catalyses the reaction a very-long-chain acyl-CoA + malonyl-CoA + H(+) = a very-long-chain 3-oxoacyl-CoA + CO2 + CoA. Its pathway is lipid metabolism; fatty acid biosynthesis. Inhibited by K3 herbicides such as alachlor, allidochlor, anilofos, cafenstrole, fentrazamide and flufenacet. Strongly inhibited by metazachlor and only slightly by mefluidide. In terms of biological role, mediates the synthesis of VLCFAs from 22 to 26 carbons in length (e.g. C22, C24, C26). Functionally redundant with KCS2 in the two-carbon elongation of C22 fatty acids that is required for cuticular wax and root suberin biosynthesis. The chain is 3-ketoacyl-CoA synthase 20 from Arabidopsis thaliana (Mouse-ear cress).